Here is a 1191-residue protein sequence, read N- to C-terminus: DNA-directed RNA polymerase subunit beta (1191 aa).

Residues 1171 to 1181 (RVKQEAEEKQA) show a composition bias toward basic and acidic residues. The segment at 1171–1191 (RVKQEAEEKQAEQVSEVVQED) is disordered. Over residues 1182 to 1191 (EQVSEVVQED) the composition is skewed to low complexity.

The protein belongs to the RNA polymerase beta chain family. As to quaternary structure, the RNAP catalytic core consists of 2 alpha, 1 beta, 1 beta' and 1 omega subunit. When a sigma factor is associated with the core the holoenzyme is formed, which can initiate transcription.

It catalyses the reaction RNA(n) + a ribonucleoside 5'-triphosphate = RNA(n+1) + diphosphate. DNA-dependent RNA polymerase catalyzes the transcription of DNA into RNA using the four ribonucleoside triphosphates as substrates. The protein is DNA-directed RNA polymerase subunit beta of Streptococcus agalactiae serotype Ia (strain ATCC 27591 / A909 / CDC SS700).